Here is a 306-residue protein sequence, read N- to C-terminus: UDP-3-O-acyl-N-acetylglucosamine deacetylase (306 aa).

Zn(2+) contacts are provided by His-79, His-238, and Asp-242. His-265 (proton donor) is an active-site residue.

Belongs to the LpxC family. Zn(2+) serves as cofactor.

It catalyses the reaction a UDP-3-O-[(3R)-3-hydroxyacyl]-N-acetyl-alpha-D-glucosamine + H2O = a UDP-3-O-[(3R)-3-hydroxyacyl]-alpha-D-glucosamine + acetate. It functions in the pathway glycolipid biosynthesis; lipid IV(A) biosynthesis; lipid IV(A) from (3R)-3-hydroxytetradecanoyl-[acyl-carrier-protein] and UDP-N-acetyl-alpha-D-glucosamine: step 2/6. In terms of biological role, catalyzes the hydrolysis of UDP-3-O-myristoyl-N-acetylglucosamine to form UDP-3-O-myristoylglucosamine and acetate, the committed step in lipid A biosynthesis. This is UDP-3-O-acyl-N-acetylglucosamine deacetylase from Shewanella piezotolerans (strain WP3 / JCM 13877).